The sequence spans 400 residues: Subtilisin-like protease 2 (400 aa).

An N-terminal signal peptide occupies residues 1 to 20; it reads MKFSQSLIALAACFLPLIAA. The propeptide occupies 21-119; that stretch reads APEEAQHAKI…IERDGKVQAN (99 aa). One can recognise an Inhibitor I9 domain in the interval 42 to 117; it reads SYIVVFNKGV…AWIERDGKVQ (76 aa). An N-linked (GlcNAc...) asparagine glycan is attached at N82. A Peptidase S8 domain is found at 128–400; the sequence is TWGLGRISHK…NLIAYNGNGA (273 aa). Catalysis depends on charge relay system residues D160, H192, and S345.

The protein belongs to the peptidase S8 family.

The protein localises to the secreted. Its activity is regulated as follows. Potently inhibited by the serine peptidase inhibitor chymostatin. Also inhibited by antpain and PMSF. Major secreted subtilisin-like serine endopeptidase. Preferentially cleaves substrates containing hydrophobic residues at P4, positively charged residues at P3, small or flexible residues at P2, and large, bulky residues at P1. Mediates the degradation of collagen, the major structural protein in the mammalian host. Degrades the nonhelical regions of collagen that function in the cross-linking of the helical components. May function as virulence factor involved in epidermal wing necrosis observed in white nose syndrome (WNS) in bats. This Pseudogymnoascus destructans (strain ATCC MYA-4855 / 20631-21) (Bat white-nose syndrome fungus) protein is Subtilisin-like protease 2.